A 509-amino-acid chain; its full sequence is Glycerol kinase (509 aa).

Thr12 serves as a coordination point for ADP. Thr12, Thr13, and Ser14 together coordinate ATP. Thr12 serves as a coordination point for sn-glycerol 3-phosphate. Arg16 lines the ADP pocket. Residues Arg82, Glu83, Tyr134, and Asp245 each contribute to the sn-glycerol 3-phosphate site. The glycerol site is built by Arg82, Glu83, Tyr134, Asp245, and Gln246. 2 residues coordinate ADP: Thr267 and Gly311. ATP contacts are provided by Thr267, Gly311, Gln315, and Gly412. ADP contacts are provided by Gly412 and Asn416.

The protein belongs to the FGGY kinase family.

The catalysed reaction is glycerol + ATP = sn-glycerol 3-phosphate + ADP + H(+). Its pathway is polyol metabolism; glycerol degradation via glycerol kinase pathway; sn-glycerol 3-phosphate from glycerol: step 1/1. Its activity is regulated as follows. Inhibited by fructose 1,6-bisphosphate (FBP). Functionally, key enzyme in the regulation of glycerol uptake and metabolism. Catalyzes the phosphorylation of glycerol to yield sn-glycerol 3-phosphate. This chain is Glycerol kinase, found in Rhizorhabdus wittichii (strain DSM 6014 / CCUG 31198 / JCM 15750 / NBRC 105917 / EY 4224 / RW1) (Sphingomonas wittichii).